The chain runs to 342 residues: Ribosomal RNA small subunit methyltransferase C (342 aa).

This sequence belongs to the methyltransferase superfamily. RsmC family. As to quaternary structure, monomer.

It is found in the cytoplasm. It catalyses the reaction guanosine(1207) in 16S rRNA + S-adenosyl-L-methionine = N(2)-methylguanosine(1207) in 16S rRNA + S-adenosyl-L-homocysteine + H(+). In terms of biological role, specifically methylates the guanine in position 1207 of 16S rRNA in the 30S particle. This is Ribosomal RNA small subunit methyltransferase C from Salmonella choleraesuis (strain SC-B67).